The following is a 1014-amino-acid chain: MICAL-like protein 2 (1014 aa).

The Calponin-homology (CH) domain occupies 1-107 (MAAIKALQEW…YVSQYYNYFH (107 aa)). Residues 1–261 (MAAIKALQEW…KLSNLASRQP (261 aa)) form a forms an intramolecular interaction with the C-terminal coiled coil domain keeping the protein in a closed conformation region. A phosphoserine mark is found at Ser110, Ser144, and Ser154. The tract at residues 114 to 181 (GMAGMKRPSS…PSPKAAPGTV (68 aa)) is disordered. An LIM zinc-binding domain is found at 187–249 (SICGVCGKHV…THHSSEAVSV (63 aa)). Ser250 carries the post-translational modification Phosphoserine. Residues 262–394 (GGGIADTRPI…QGQAASKGVK (133 aa)) form a necessary and sufficient for interaction with actinins region. The segment at 262–810 (GGGIADTRPI…QDDQTRSCKE (549 aa)) is mediates targeting to the cell plasma membrane. 2 disordered regions span residues 311 to 450 (LTPP…SRVP) and 609 to 780 (TLPK…RRKK). The segment covering 332 to 355 (STVTTTSANSKATTHVTNSSPVGW) has biased composition (polar residues). The segment covering 356-368 (SSSAQSSTGTSGS) has biased composition (low complexity). The segment covering 384-398 (PQGQAASKGVKTQLN) has biased composition (polar residues). Low complexity-rich tracts occupy residues 399–419 (SSTDSSSTAPTPAWTSSSSRT) and 438–447 (PASSSSSHAS). Polar residues-rich tracts occupy residues 624–633 (LSHSTTQAFS) and 646–656 (VGSTSWTSVSL). 2 stretches are compositionally biased toward basic and acidic residues: residues 701–711 (EGWRARLKPVD) and 720–737 (LEQKEPVLAEPRAGDTPR). Residues 747 to 758 (IHITLTPIQQKR) are compositionally biased toward polar residues. The residue at position 759 (Thr759) is a Phosphothreonine. Phosphoserine is present on residues Ser773 and Ser837. The interval 811–918 (KTATWGTRES…LMYKSKDQCL (108 aa)) is forms an intramolecular interaction with the N-terminal Calponin-homology and LIM zinc-binding domains-containing region keeping the protein in a closed conformation. Residues 838–985 (PVRLHPNYIS…EQEEDQMLES (148 aa)) form the bMERB domain. Residues 845–885 (YISQEELQRQLQDIERQLDALELRGVELEKRLRAAEGDASE) are a coiled coil. Residues 918–1014 (LEERQLDLQG…WSSKSKSGQT (97 aa)) form a mediates interaction with RAB13 and is required for transition from the closed to the open conformation region.

As to quaternary structure, interacts with RAB13 (GTP-bound form); competes with RAB8A and is involved in tight junctions assembly. Interacts with RAB8A; competes with RAB13 and is involved in E-cadherin endocytic recycling. Interacts with RAB8B. Interacts (preferentially in opened conformation) with ACTN1 and ACTN4; stimulated by RAB13 activation. Interacts (via calponin-homology (CH) domain) with the filamins FLNA, FLNB and FLNC (via actin-binding domain).

The protein localises to the cell membrane. It is found in the cell junction. It localises to the tight junction. The protein resides in the recycling endosome. Its subcellular location is the cell projection. The protein localises to the neuron projection. It is found in the cytoplasm. It localises to the cytoskeleton. Effector of small Rab GTPases which is involved in junctional complexes assembly through the regulation of cell adhesion molecules transport to the plasma membrane and actin cytoskeleton reorganization. Regulates the endocytic recycling of occludins, claudins and E-cadherin to the plasma membrane and may thereby regulate the establishment of tight junctions and adherens junctions. In parallel, may regulate actin cytoskeleton reorganization directly through interaction with F-actin or indirectly through actinins and filamins. Most probably involved in the processes of epithelial cell differentiation, cell spreading and neurite outgrowth. Undergoes liquid-liquid phase separation to form tubular recycling endosomes. Plays 2 sequential roles in the biogenesis of tubular recycling endosomes: first organizes phase separation and then the closed form formed by interaction with RAB8A promotes endosomal tubulation. The polypeptide is MICAL-like protein 2 (Micall2) (Rattus norvegicus (Rat)).